Consider the following 445-residue polypeptide: tRNA modification GTPase MnmE (445 aa).

(6S)-5-formyl-5,6,7,8-tetrahydrofolate is bound by residues arginine 25, glutamate 83, and lysine 121. The region spanning 217-371 (GVRVVILGPP…LLTLIQEKSR (155 aa)) is the TrmE-type G domain. Residues 227-232 (NAGKST), 246-252 (SEHPGTT), and 271-274 (DTAG) each bind GTP. Positions 231 and 252 each coordinate Mg(2+). Lysine 445 serves as a coordination point for (6S)-5-formyl-5,6,7,8-tetrahydrofolate.

The protein belongs to the TRAFAC class TrmE-Era-EngA-EngB-Septin-like GTPase superfamily. TrmE GTPase family. As to quaternary structure, homodimer. Heterotetramer of two MnmE and two MnmG subunits. K(+) is required as a cofactor.

The protein resides in the cytoplasm. Functionally, exhibits a very high intrinsic GTPase hydrolysis rate. Involved in the addition of a carboxymethylaminomethyl (cmnm) group at the wobble position (U34) of certain tRNAs, forming tRNA-cmnm(5)s(2)U34. The sequence is that of tRNA modification GTPase MnmE from Anaplasma phagocytophilum (strain HZ).